Here is a 132-residue protein sequence, read N- to C-terminus: Small ribosomal subunit protein uS8 (132 aa).

The protein belongs to the universal ribosomal protein uS8 family. In terms of assembly, part of the 30S ribosomal subunit. Contacts proteins S5 and S12.

One of the primary rRNA binding proteins, it binds directly to 16S rRNA central domain where it helps coordinate assembly of the platform of the 30S subunit. This is Small ribosomal subunit protein uS8 from Streptococcus pneumoniae (strain Taiwan19F-14).